A 280-amino-acid chain; its full sequence is Elongation factor Ts (280 aa).

An involved in Mg(2+) ion dislocation from EF-Tu region spans residues 82–85 (TDFV).

This sequence belongs to the EF-Ts family.

The protein resides in the cytoplasm. Its function is as follows. Associates with the EF-Tu.GDP complex and induces the exchange of GDP to GTP. It remains bound to the aminoacyl-tRNA.EF-Tu.GTP complex up to the GTP hydrolysis stage on the ribosome. The chain is Elongation factor Ts from Baumannia cicadellinicola subsp. Homalodisca coagulata.